The primary structure comprises 159 residues: Transcriptional repressor NrdR (159 aa).

A zinc finger spans residues 3 to 34 (CPFCRHDDTQVVDSRVSEDGAAIRRRRRCSAC). The region spanning 49–139 (PFVVKKDGSR…VYRRFEDVSE (91 aa)) is the ATP-cone domain.

The protein belongs to the NrdR family. Requires Zn(2+) as cofactor.

Functionally, negatively regulates transcription of bacterial ribonucleotide reductase nrd genes and operons by binding to NrdR-boxes. In Burkholderia cenocepacia (strain ATCC BAA-245 / DSM 16553 / LMG 16656 / NCTC 13227 / J2315 / CF5610) (Burkholderia cepacia (strain J2315)), this protein is Transcriptional repressor NrdR.